An 859-amino-acid chain; its full sequence is DNA mismatch repair protein MutS (859 aa).

617 to 624 (GPNMGGKS) is an ATP binding site. The segment at 801–820 (TSLPHEVAPQAPGKPSVPQQ) is disordered.

Belongs to the DNA mismatch repair MutS family.

This protein is involved in the repair of mismatches in DNA. It is possible that it carries out the mismatch recognition step. This protein has a weak ATPase activity. The sequence is that of DNA mismatch repair protein MutS from Pseudomonas fluorescens (strain ATCC BAA-477 / NRRL B-23932 / Pf-5).